Consider the following 306-residue polypeptide: Glutaminase (306 aa).

Substrate is bound by residues Ser64, Asn115, Glu159, Asn166, Tyr190, Tyr242, and Val260.

This sequence belongs to the glutaminase family. Homotetramer.

It catalyses the reaction L-glutamine + H2O = L-glutamate + NH4(+). This chain is Glutaminase, found in Vibrio cholerae serotype O1 (strain ATCC 39541 / Classical Ogawa 395 / O395).